The sequence spans 239 residues: 2,3,4,5-tetrahydropyridine-2,6-dicarboxylate N-acetyltransferase (239 aa).

The protein belongs to the transferase hexapeptide repeat family. DapH subfamily.

It catalyses the reaction (S)-2,3,4,5-tetrahydrodipicolinate + acetyl-CoA + H2O = L-2-acetamido-6-oxoheptanedioate + CoA. The protein operates within amino-acid biosynthesis; L-lysine biosynthesis via DAP pathway; LL-2,6-diaminopimelate from (S)-tetrahydrodipicolinate (acetylase route): step 1/3. Catalyzes the transfer of an acetyl group from acetyl-CoA to tetrahydrodipicolinate. The chain is 2,3,4,5-tetrahydropyridine-2,6-dicarboxylate N-acetyltransferase from Staphylococcus aureus (strain MRSA252).